We begin with the raw amino-acid sequence, 160 residues long: MSFNHFDEQGQAIMVDVSGKEPTLRTARAQAVVRLRPETLQAILDGRMTKGDVLGVARLAGIAAAKKTPELIPLSHPLAIHHAAVEFATDPETGEIAVTATVRAFERTGVEMEAMVSASVAALTVYDMCKGSDKGITIGQVALLYKEGGKSGVYRREEER.

Residues 74–76 (LSH) and 112–113 (ME) each bind substrate. Residue Asp-127 is part of the active site.

Belongs to the MoaC family. Homohexamer; trimer of dimers.

The enzyme catalyses (8S)-3',8-cyclo-7,8-dihydroguanosine 5'-triphosphate = cyclic pyranopterin phosphate + diphosphate. It functions in the pathway cofactor biosynthesis; molybdopterin biosynthesis. Its function is as follows. Catalyzes the conversion of (8S)-3',8-cyclo-7,8-dihydroguanosine 5'-triphosphate to cyclic pyranopterin monophosphate (cPMP). The polypeptide is Cyclic pyranopterin monophosphate synthase (Geotalea uraniireducens (strain Rf4) (Geobacter uraniireducens)).